The chain runs to 305 residues: Carbonic anhydrase 5A, mitochondrial (305 aa).

Residues 1–38 (MLGRNTWKTSAFSFLVEQMWAPLWSRSMRPGRWCSQRS) constitute a mitochondrion transit peptide. One can recognise an Alpha-carbonic anhydrase domain in the interval 39-296 (CAWQTSNNTL…LMNRKVWASF (258 aa)). 3 residues coordinate Zn(2+): histidine 130, histidine 132, and histidine 155.

It belongs to the alpha-carbonic anhydrase family. Zn(2+) is required as a cofactor.

The protein resides in the mitochondrion. The catalysed reaction is hydrogencarbonate + H(+) = CO2 + H2O. Its activity is regulated as follows. Activated by L- and D-histidine. Activated by L- and D-phenylalanine. Activated by L-adrenaline. Inhibited by coumarins, sulfonamide derivatives such as acetazolamide and Foscarnet (phosphonoformate trisodium salt). Activated by histamine. Mitochondrial carbonic anhydrase that catalyzes the reversible conversion of carbon dioxide to bicarbonate/HCO3. Mitochondria are impermeable to HCO3, and thus this intramitochondrial carbonic anhydrase is pivotal in providing HCO3 for multiple mitochondrial enzymes that catalyze the formation of essential metabolites of intermediary metabolism in the urea and Krebs cycles. The sequence is that of Carbonic anhydrase 5A, mitochondrial from Homo sapiens (Human).